Reading from the N-terminus, the 795-residue chain is Phenylalanine--tRNA ligase beta subunit (795 aa).

Residues 39 to 148 (AGAFHGVVVG…ADAPLGTDIR (110 aa)) enclose the tRNA-binding domain. A B5 domain is found at 401 to 476 (PARATIALRR…RVYGYNNIPN (76 aa)). The Mg(2+) site is built by D454, D460, E463, and E464. In terms of domain architecture, FDX-ACB spans 701–794 (SRFPANRRDI…LKQRFQASLR (94 aa)).

Belongs to the phenylalanyl-tRNA synthetase beta subunit family. Type 1 subfamily. As to quaternary structure, tetramer of two alpha and two beta subunits. The cofactor is Mg(2+).

The protein localises to the cytoplasm. The catalysed reaction is tRNA(Phe) + L-phenylalanine + ATP = L-phenylalanyl-tRNA(Phe) + AMP + diphosphate + H(+). The polypeptide is Phenylalanine--tRNA ligase beta subunit (pheT) (Dickeya dadantii (strain 3937) (Erwinia chrysanthemi (strain 3937))).